A 508-amino-acid chain; its full sequence is Maturase K (508 aa).

The protein belongs to the intron maturase 2 family. MatK subfamily.

Its subcellular location is the plastid. The protein localises to the chloroplast. Its function is as follows. Usually encoded in the trnK tRNA gene intron. Probably assists in splicing its own and other chloroplast group II introns. The sequence is that of Maturase K from Marathrum schiedeanum.